The primary structure comprises 455 residues: 3-isopropylmalate dehydratase large subunit (455 aa).

The [4Fe-4S] cluster site is built by Cys336, Cys396, and Cys399.

It belongs to the aconitase/IPM isomerase family. LeuC type 1 subfamily. Heterodimer of LeuC and LeuD. Requires [4Fe-4S] cluster as cofactor.

It catalyses the reaction (2R,3S)-3-isopropylmalate = (2S)-2-isopropylmalate. It functions in the pathway amino-acid biosynthesis; L-leucine biosynthesis; L-leucine from 3-methyl-2-oxobutanoate: step 2/4. In terms of biological role, catalyzes the isomerization between 2-isopropylmalate and 3-isopropylmalate, via the formation of 2-isopropylmaleate. The sequence is that of 3-isopropylmalate dehydratase large subunit from Staphylococcus aureus (strain MRSA252).